The chain runs to 262 residues: 3-methyl-2-oxobutanoate hydroxymethyltransferase (262 aa).

Residues Asp-43 and Asp-82 each contribute to the Mg(2+) site. Residues 43–44 (DS), Asp-82, and Lys-111 each bind 3-methyl-2-oxobutanoate. Glu-113 provides a ligand contact to Mg(2+). Catalysis depends on Glu-180, which acts as the Proton acceptor.

The protein belongs to the PanB family. Homodecamer; pentamer of dimers. Mg(2+) is required as a cofactor.

It is found in the cytoplasm. The enzyme catalyses 3-methyl-2-oxobutanoate + (6R)-5,10-methylene-5,6,7,8-tetrahydrofolate + H2O = 2-dehydropantoate + (6S)-5,6,7,8-tetrahydrofolate. It functions in the pathway cofactor biosynthesis; (R)-pantothenate biosynthesis; (R)-pantoate from 3-methyl-2-oxobutanoate: step 1/2. Functionally, catalyzes the reversible reaction in which hydroxymethyl group from 5,10-methylenetetrahydrofolate is transferred onto alpha-ketoisovalerate to form ketopantoate. In Wolinella succinogenes (strain ATCC 29543 / DSM 1740 / CCUG 13145 / JCM 31913 / LMG 7466 / NCTC 11488 / FDC 602W) (Vibrio succinogenes), this protein is 3-methyl-2-oxobutanoate hydroxymethyltransferase.